The chain runs to 398 residues: Dihydroorotase (398 aa).

2 residues coordinate Zn(2+): H58 and H60. Substrate-binding positions include 60–62 and N92; that span reads HFR. 3 residues coordinate Zn(2+): D151, H178, and H215. N256 contributes to the substrate binding site. D283 lines the Zn(2+) pocket. The active site involves D283. Substrate contacts are provided by residues H287 and 297-298; that span reads PG.

The protein belongs to the metallo-dependent hydrolases superfamily. DHOase family. Class I DHOase subfamily. The cofactor is Zn(2+).

It catalyses the reaction (S)-dihydroorotate + H2O = N-carbamoyl-L-aspartate + H(+). The protein operates within pyrimidine metabolism; UMP biosynthesis via de novo pathway; (S)-dihydroorotate from bicarbonate: step 3/3. Catalyzes the reversible cyclization of carbamoyl aspartate to dihydroorotate. The sequence is that of Dihydroorotase from Clostridium botulinum (strain Eklund 17B / Type B).